The primary structure comprises 346 residues: tRNA pseudouridine synthase D (346 aa).

The active-site Nucleophile is the aspartate 81. Positions 157–303 constitute a TRUD domain; it reads GVPNYFGLQR…MKHERRILRL (147 aa).

Belongs to the pseudouridine synthase TruD family.

The enzyme catalyses uridine(13) in tRNA = pseudouridine(13) in tRNA. Responsible for synthesis of pseudouridine from uracil-13 in transfer RNAs. The protein is tRNA pseudouridine synthase D of Stutzerimonas stutzeri (strain A1501) (Pseudomonas stutzeri).